The sequence spans 191 residues: dCTP deaminase, dUMP-forming (191 aa).

DCTP contacts are provided by residues 101–106 (KSSLGR), D119, 127–129 (TLE), Q148, Y162, and Q174. E129 (proton donor/acceptor) is an active-site residue. The disordered stretch occupies residues 163–191 (GSPVYGSRYQGQRGPTPSRSWQNFHRTKI). The segment covering 171 to 191 (YQGQRGPTPSRSWQNFHRTKI) has biased composition (polar residues).

This sequence belongs to the dCTP deaminase family. In terms of assembly, homotrimer.

It catalyses the reaction dCTP + 2 H2O = dUMP + NH4(+) + diphosphate. It participates in pyrimidine metabolism; dUMP biosynthesis; dUMP from dCTP: step 1/1. Its function is as follows. Bifunctional enzyme that catalyzes both the deamination of dCTP to dUTP and the hydrolysis of dUTP to dUMP without releasing the toxic dUTP intermediate. This chain is dCTP deaminase, dUMP-forming, found in Acidothermus cellulolyticus (strain ATCC 43068 / DSM 8971 / 11B).